The following is a 396-amino-acid chain: Methionine import ATP-binding protein MetN 2 (396 aa).

The region spanning valine 41–leucine 280 is the ABC transporter domain. Glycine 77–serine 84 is an ATP binding site.

The protein belongs to the ABC transporter superfamily. Methionine importer (TC 3.A.1.24) family. As to quaternary structure, the complex is composed of two ATP-binding proteins (MetN), two transmembrane proteins (MetI) and a solute-binding protein (MetQ).

The protein localises to the cell inner membrane. The enzyme catalyses L-methionine(out) + ATP + H2O = L-methionine(in) + ADP + phosphate + H(+). The catalysed reaction is D-methionine(out) + ATP + H2O = D-methionine(in) + ADP + phosphate + H(+). Its function is as follows. Part of the ABC transporter complex MetNIQ involved in methionine import. Responsible for energy coupling to the transport system. In Burkholderia mallei (strain ATCC 23344), this protein is Methionine import ATP-binding protein MetN 2.